The following is a 109-amino-acid chain: U26-theraphotoxin-Cg1b (109 aa).

The signal sequence occupies residues 1 to 18 (MNTIIPLLLLSLLITVYA). The propeptide occupies 19–67 (YALEDGNKEEMQDIAESEFEASNEMLQLAHLLEADRAETEEDRNSRQKR). Disulfide bonds link Cys68–Cys83, Cys75–Cys88, and Cys82–Cys103.

Belongs to the neurotoxin 14 (magi-1) family. 07 (Jztx-56) subfamily. In terms of tissue distribution, expressed by the venom gland.

It localises to the secreted. Its function is as follows. Probable ion channel inhibitor. In Chilobrachys guangxiensis (Chinese earth tiger tarantula), this protein is U26-theraphotoxin-Cg1b.